Consider the following 166-residue polypeptide: NADPH-dependent 7-cyano-7-deazaguanine reductase (166 aa).

Cys-57 (thioimide intermediate) is an active-site residue. Asp-64 acts as the Proton donor in catalysis. Residues Val-79 to Ser-81 and His-98 to Glu-99 each bind substrate.

The protein belongs to the GTP cyclohydrolase I family. QueF type 1 subfamily.

Its subcellular location is the cytoplasm. The catalysed reaction is 7-aminomethyl-7-carbaguanine + 2 NADP(+) = 7-cyano-7-deazaguanine + 2 NADPH + 3 H(+). Its pathway is tRNA modification; tRNA-queuosine biosynthesis. Functionally, catalyzes the NADPH-dependent reduction of 7-cyano-7-deazaguanine (preQ0) to 7-aminomethyl-7-deazaguanine (preQ1). The protein is NADPH-dependent 7-cyano-7-deazaguanine reductase of Alkaliphilus metalliredigens (strain QYMF).